Here is a 122-residue protein sequence, read N- to C-terminus: ATP synthase epsilon chain (122 aa).

This sequence belongs to the ATPase epsilon chain family. F-type ATPases have 2 components, CF(1) - the catalytic core - and CF(0) - the membrane proton channel. CF(1) has five subunits: alpha(3), beta(3), gamma(1), delta(1), epsilon(1). CF(0) has three main subunits: a, b and c.

It localises to the cell membrane. Functionally, produces ATP from ADP in the presence of a proton gradient across the membrane. In Rhodococcus erythropolis (strain PR4 / NBRC 100887), this protein is ATP synthase epsilon chain.